The sequence spans 196 residues: Pyridoxal 5'-phosphate synthase subunit PdxT (196 aa).

L-glutamine is bound at residue 47–49; the sequence is GES. The Nucleophile role is filled by C79. Residues R106 and 134–135 contribute to the L-glutamine site; that span reads IR. Active-site charge relay system residues include H170 and E172.

This sequence belongs to the glutaminase PdxT/SNO family. In the presence of PdxS, forms a dodecamer of heterodimers. Only shows activity in the heterodimer.

The enzyme catalyses aldehydo-D-ribose 5-phosphate + D-glyceraldehyde 3-phosphate + L-glutamine = pyridoxal 5'-phosphate + L-glutamate + phosphate + 3 H2O + H(+). The catalysed reaction is L-glutamine + H2O = L-glutamate + NH4(+). It participates in cofactor biosynthesis; pyridoxal 5'-phosphate biosynthesis. In terms of biological role, catalyzes the hydrolysis of glutamine to glutamate and ammonia as part of the biosynthesis of pyridoxal 5'-phosphate. The resulting ammonia molecule is channeled to the active site of PdxS. The protein is Pyridoxal 5'-phosphate synthase subunit PdxT of Bacillus mycoides (strain KBAB4) (Bacillus weihenstephanensis).